Here is a 220-residue protein sequence, read N- to C-terminus: MADS-box protein AGL24 (220 aa).

In terms of domain architecture, MADS-box spans 1–61 (MAREKIRIKK…GKLFEFSSSR (61 aa)). Residues 87–177 (LRLENCNLSR…RDKLETLERA (91 aa)) form the K-box domain. Positions 190 to 200 (SVTTNVSSYDS) are enriched in polar residues. The tract at residues 190–220 (SVTTNVSSYDSGTPLEDDSDTSLKLGLPSWE) is disordered.

As to quaternary structure, interacts with IMK3/MRLK. Forms a homodimer and heterodimer with SOC1, AP1 and SVP through MADS-box domain. Interacts with the SEU-LUG corepressor complex when complexed to AP1. Interacts with AGL15 and AGL16. Phosphorylated by IMK3. Induced by vernalization. Mostly expressed in shoot apical meristems, including floral meristems. Also detected in stems, seedlings, leaves, flowers and siliques, and, to a lower extent, in roots.

The protein localises to the nucleus. It localises to the cytoplasm. Its function is as follows. Transcription activator that mediates floral transition in response to vernalization. Promotes inflorescence fate in apical meristems. Acts in a dosage-dependent manner. Probably involved in the transduction of RLK-mediated signaling (e.g. IMK3 pathway). Together with AP1 and SVP, controls the identity of the floral meristem and regulates expression of class B, C and E genes. When associated with SOC1, mediates effect of gibberellins on flowering under short-day conditions, and regulates the expression of LEAFY (LFY), which links floral induction and floral development. Confers inflorescence characteristics to floral primordia and early flowering. This chain is MADS-box protein AGL24 (AGL24), found in Arabidopsis thaliana (Mouse-ear cress).